Consider the following 266-residue polypeptide: Integral membrane protein 2B (266 aa).

At M1–C54 the chain is on the cytoplasmic side. The chain crosses the membrane as a helical; Signal-anchor for type II membrane protein span at residues W55–L75. Over Y76–P266 the chain is Lumenal. Residues E102–V134 form a necessary for interaction with APP and inhibitor effects on APP processing region. The BRICHOS domain maps to F137–L231. Intrachain disulfides connect C164–C223 and C248–C265. N170 carries an N-linked (GlcNAc...) asparagine glycan.

It belongs to the ITM2 family. Homodimer; disulfide-linked. Interacts with SPPL2A and SPPL2B. Interacts with APP. Mature BRI2 (mBRI2) interacts with the APP amyloid-beta A4 protein; the interaction occurs at the cell surface and in the endocytic compartments and enable alpha- and beta-secretase-induced APP cleavage inhibition. Mature BRI2 (mBRI2) interacts with the APP C99; the interaction occurs in the endocytic compartments and enable gamma-secretase-induced C99 cleavage inhibition. May form heterodimers with Bri23 peptide and APP amyloid-beta protein 40. Interacts with ADAM7 in sperm; the interaction increases following capacitation. In terms of processing, the ectodomain C-terminal part of the imBRI2 is processed by furin producing a secreted Bri23 peptide and a mature BRI2, membrane form (mBRI2). The remaining part of the ectodomain of mBRI2 containing the BRICHOS domain is cleaved by ADAM10 and is secreted (BRI2C, soluble form). The membrane-bound N-terminal fragment (BRI2C, membrane form) is further proteolytically processed by SPPL2A and SPPL2B through regulated intramembrane proteolysis producing a secreted C-peptide and a BRI2 intracellular domain (BRI2 ICD) released in the cytosol. Shedding by ADAM10 facilitates intramembrane cleavage but is not absolutely required for BRI2 ICD generation. Post-translationally, glycosylation at Asn-170 is important for cell surface localization, but doesn't affect furin- and ADAM10-induced proteolytic processing.

It localises to the golgi apparatus membrane. It is found in the cell membrane. Its subcellular location is the endosome membrane. The protein localises to the secreted. In terms of biological role, plays a regulatory role in the processing of the amyloid-beta A4 precursor protein (APP) and acts as an inhibitor of the amyloid-beta peptide aggregation and fibrils deposition. Plays a role in the induction of neurite outgrowth. Functions as a protease inhibitor by blocking access of secretases to APP cleavage sites. Mature BRI2 (mBRI2) functions as a modulator of the amyloid-beta A4 precursor protein (APP) processing leading to a strong reduction in the secretion of secretase-processed amyloid-beta protein 40 and amyloid-beta protein 42. Its function is as follows. Bri23 peptide prevents aggregation of APP amyloid-beta protein 42 into toxic oligomers. This is Integral membrane protein 2B (ITM2B) from Bos taurus (Bovine).